Consider the following 337-residue polypeptide: Pyrophosphate--fructose 6-phosphate 1-phosphotransferase (337 aa).

Residue Gly10 coordinates diphosphate. Mg(2+) is bound at residue Asp101. Substrate-binding positions include 124–126 (TID), Arg161, 168–170 (MGR), Glu220, Arg257, and 263–266 (HTIR). The active-site Proton acceptor is Asp126.

Belongs to the phosphofructokinase type A (PFKA) family. Mixed-substrate PFK group III subfamily. In terms of assembly, homodimer or homotrimer. Mg(2+) serves as cofactor.

It is found in the cytoplasm. The catalysed reaction is beta-D-fructose 6-phosphate + diphosphate = beta-D-fructose 1,6-bisphosphate + phosphate + H(+). Its pathway is carbohydrate degradation; glycolysis; D-glyceraldehyde 3-phosphate and glycerone phosphate from D-glucose: step 3/4. Its activity is regulated as follows. Non-allosteric. In terms of biological role, catalyzes the phosphorylation of D-fructose 6-phosphate, the first committing step of glycolysis. Uses inorganic phosphate (PPi) as phosphoryl donor instead of ATP like common ATP-dependent phosphofructokinases (ATP-PFKs), which renders the reaction reversible, and can thus function both in glycolysis and gluconeogenesis. Consistently, PPi-PFK can replace the enzymes of both the forward (ATP-PFK) and reverse (fructose-bisphosphatase (FBPase)) reactions. In Thermoproteus tenax (strain ATCC 35583 / DSM 2078 / JCM 9277 / NBRC 100435 / Kra 1), this protein is Pyrophosphate--fructose 6-phosphate 1-phosphotransferase.